We begin with the raw amino-acid sequence, 144 residues long: Large ribosomal subunit protein uL13 (144 aa).

This sequence belongs to the universal ribosomal protein uL13 family. In terms of assembly, part of the 50S ribosomal subunit.

Its function is as follows. This protein is one of the early assembly proteins of the 50S ribosomal subunit, although it is not seen to bind rRNA by itself. It is important during the early stages of 50S assembly. The polypeptide is Large ribosomal subunit protein uL13 (Legionella pneumophila (strain Paris)).